Consider the following 182-residue polypeptide: Plasmolipin (182 aa).

Residues 1 to 35 (MAEFPSKVSTRTSSPAQGAEASVSALRPDLGFVRS) are Cytoplasmic-facing. Residue serine 9 is modified to Phosphoserine. An MARVEL domain is found at 32-166 (FVRSRLGALM…SAFFSYQAWR (135 aa)). A helical membrane pass occupies residues 36 to 56 (RLGALMLLQLVLGLLVWALIA). The Extracellular portion of the chain corresponds to 57 to 68 (DTPYHLYPAYGW). Residues 69 to 89 (VMFVAVFLWLVTIVLFNLYLF) form a helical membrane-spanning segment. Over 90-99 (QLHMKLYMVP) the chain is Cytoplasmic. The chain crosses the membrane as a helical span at residues 100–120 (WPLVLMIFNISATVLYITAFI). Residues 121–141 (ACSAAVDLTSLRGTRPYNQRA) are Extracellular-facing. A helical membrane pass occupies residues 142-162 (AASFFACLVMIAYGVSAFFSY). Over 163–182 (QAWRGVGSNAATSQMAGGYA) the chain is Cytoplasmic.

The protein belongs to the MAL family. As to quaternary structure, forms oligomers. Phosphorylated.

The protein localises to the cell membrane. It localises to the myelin membrane. It is found in the apical cell membrane. The protein resides in the golgi apparatus. In terms of biological role, main component of the myelin sheath that plays an important role in myelin membrane biogenesis and myelination. Plays an essential function in apical endocytosis. Regulates epithelial development through the regulation of apical endocytosis. Part of the intracellular machinery that mediates basolateral-to-apical transport of ICAM-1, an essential adhesion receptor in epithelial cells, from the subapical compartment in hepatic epithelial cells. This is Plasmolipin from Homo sapiens (Human).